Here is a 209-residue protein sequence, read N- to C-terminus: dITP/XTP pyrophosphatase (209 aa).

Substrate is bound at residue 7-12; that stretch reads SSHGYK. Aspartate 70 serves as the catalytic Proton acceptor. Aspartate 70 contributes to the Mg(2+) binding site. Substrate contacts are provided by residues serine 71, 154-157, lysine 177, and 182-183; these read FGYD and HR.

It belongs to the HAM1 NTPase family. As to quaternary structure, homodimer. It depends on Mg(2+) as a cofactor.

The catalysed reaction is XTP + H2O = XMP + diphosphate + H(+). It catalyses the reaction dITP + H2O = dIMP + diphosphate + H(+). It carries out the reaction ITP + H2O = IMP + diphosphate + H(+). Pyrophosphatase that catalyzes the hydrolysis of nucleoside triphosphates to their monophosphate derivatives, with a high preference for the non-canonical purine nucleotides XTP (xanthosine triphosphate), dITP (deoxyinosine triphosphate) and ITP. Seems to function as a house-cleaning enzyme that removes non-canonical purine nucleotides from the nucleotide pool, thus preventing their incorporation into DNA/RNA and avoiding chromosomal lesions. This Chlamydia trachomatis serovar L2 (strain ATCC VR-902B / DSM 19102 / 434/Bu) protein is dITP/XTP pyrophosphatase.